The sequence spans 343 residues: GTPase Obg (343 aa).

Positions 1 to 157 (MKFIDEVSIS…IEVRLELKLI (157 aa)) constitute an Obg domain. The interval 13–44 (SGRGGPGCVSFRRESMQARGGPDGGNGGKGGD) is disordered. The segment covering 33-43 (GPDGGNGGKGG) has biased composition (gly residues). The 181-residue stretch at 158–338 (ADVGIVGFPN…FVQELARQIL (181 aa)) folds into the OBG-type G domain. GTP contacts are provided by residues 164–171 (GFPNAGKS), 189–193 (FTTLT), 211–214 (DIPG), 290–293 (NKID), and 319–321 (SAV). Residues S171 and T191 each coordinate Mg(2+).

This sequence belongs to the TRAFAC class OBG-HflX-like GTPase superfamily. OBG GTPase family. Monomer. Requires Mg(2+) as cofactor.

It is found in the cytoplasm. An essential GTPase which binds GTP, GDP and possibly (p)ppGpp with moderate affinity, with high nucleotide exchange rates and a fairly low GTP hydrolysis rate. Plays a role in control of the cell cycle, stress response, ribosome biogenesis and in those bacteria that undergo differentiation, in morphogenesis control. The chain is GTPase Obg from Bdellovibrio bacteriovorus (strain ATCC 15356 / DSM 50701 / NCIMB 9529 / HD100).